A 327-amino-acid chain; its full sequence is Phenylalanine--tRNA ligase alpha subunit (327 aa).

E252 provides a ligand contact to Mg(2+).

The protein belongs to the class-II aminoacyl-tRNA synthetase family. Phe-tRNA synthetase alpha subunit type 1 subfamily. As to quaternary structure, tetramer of two alpha and two beta subunits. Mg(2+) is required as a cofactor.

The protein resides in the cytoplasm. The catalysed reaction is tRNA(Phe) + L-phenylalanine + ATP = L-phenylalanyl-tRNA(Phe) + AMP + diphosphate + H(+). The chain is Phenylalanine--tRNA ligase alpha subunit from Aliivibrio fischeri (strain ATCC 700601 / ES114) (Vibrio fischeri).